Here is a 238-residue protein sequence, read N- to C-terminus: CBS domain-containing protein CBSX2, chloroplastic (238 aa).

A chloroplast-targeting transit peptide spans 1-71; sequence MGSISLSNSM…ASVNNNNSVP (71 aa). CBS domains lie at 83 to 145 and 177 to 234; these read MTPR…QNDT and MTPS…KRET.

It localises to the plastid. Its subcellular location is the chloroplast stroma. The sequence is that of CBS domain-containing protein CBSX2, chloroplastic (CBSX2) from Arabidopsis thaliana (Mouse-ear cress).